The primary structure comprises 333 residues: Coiled-coil domain-containing protein 68 (333 aa).

Coiled coils occupy residues 86–120 (LDLL…SREA) and 160–302 (EKEQ…HWTE).

As to quaternary structure, interacts with CEP170.

It is found in the cytoplasm. It localises to the cytoskeleton. The protein localises to the microtubule organizing center. The protein resides in the centrosome. Its subcellular location is the centriole. Its function is as follows. Centriolar protein required for centriole subdistal appendage assembly and microtubule anchoring in interphase cells. Together with CCDC120, cooperate with subdistal appendage components ODF2, NIN and CEP170 for hierarchical subdistal appendage assembly. The polypeptide is Coiled-coil domain-containing protein 68 (Ccdc68) (Mus musculus (Mouse)).